The primary structure comprises 313 residues: R2-like ligand binding oxidase (313 aa).

Residues E68, E101, and H104 each coordinate Mn(2+). A cross-link (3-(O4'-tyrosyl)-valine (Val-Tyr)) is located at residues 71–162 (VTQDIQPFMS…AAQVRASVTY (92 aa)). E101 lines the Fe cation pocket. Fe cation contacts are provided by E167, E202, and H205.

This sequence belongs to the ribonucleoside diphosphate reductase small chain family. R2-like ligand binding oxidase subfamily. In terms of assembly, homodimer. The cofactor is Fe cation. Requires Mn(2+) as cofactor.

In terms of biological role, probable oxidase that might be involved in lipid metabolism. The sequence is that of R2-like ligand binding oxidase from Mycobacteroides abscessus (strain ATCC 19977 / DSM 44196 / CCUG 20993 / CIP 104536 / JCM 13569 / NCTC 13031 / TMC 1543 / L948) (Mycobacterium abscessus).